An 86-amino-acid polypeptide reads, in one-letter code: Probable acyl carrier protein CCNA_01221 (86 aa).

A Carrier domain is found at 6-83; it reads TVTDLSLREI…DLSKLINDLR (78 aa). Ser43 bears the O-(pantetheine 4'-phosphoryl)serine mark.

It belongs to the acyl carrier protein (ACP) family.

The protein operates within lipid metabolism; sphingolipid metabolism. Involved in de novo bacterial ceramide synthesis. The polypeptide is Probable acyl carrier protein CCNA_01221 (Caulobacter vibrioides (strain NA1000 / CB15N) (Caulobacter crescentus)).